Here is a 238-residue protein sequence, read N- to C-terminus: Ribitol-5-phosphate cytidylyltransferase 1 (238 aa).

Residues leucine 7–glycine 10 and glycine 81–threonine 87 each bind CTP.

The protein belongs to the IspD/TarI cytidylyltransferase family. TarI subfamily.

The enzyme catalyses D-ribitol 5-phosphate + CTP + H(+) = CDP-L-ribitol + diphosphate. The protein operates within cell wall biogenesis; poly(ribitol phosphate) teichoic acid biosynthesis. In terms of biological role, catalyzes the transfer of the cytidylyl group of CTP to D-ribitol 5-phosphate. This chain is Ribitol-5-phosphate cytidylyltransferase 1, found in Staphylococcus aureus (strain USA300).